The chain runs to 335 residues: Phenylalanine--tRNA ligase alpha subunit (335 aa).

Glu-262 is a binding site for Mg(2+).

Belongs to the class-II aminoacyl-tRNA synthetase family. Phe-tRNA synthetase alpha subunit type 1 subfamily. In terms of assembly, tetramer of two alpha and two beta subunits. The cofactor is Mg(2+).

It is found in the cytoplasm. It catalyses the reaction tRNA(Phe) + L-phenylalanine + ATP = L-phenylalanyl-tRNA(Phe) + AMP + diphosphate + H(+). In Prochlorococcus marinus subsp. pastoris (strain CCMP1986 / NIES-2087 / MED4), this protein is Phenylalanine--tRNA ligase alpha subunit.